The primary structure comprises 731 residues: Zinc finger protein 615 (731 aa).

Residues 8-79 enclose the KRAB domain; that stretch reads LTLEDVAVDF…EDEIYSRICS (72 aa). 19 consecutive C2H2-type zinc fingers follow at residues 204–226, 232–254, 260–282, 288–310, 316–338, 344–366, 372–394, 400–422, 428–450, 456–478, 484–506, 512–534, 540–562, 568–590, 596–618, 624–646, 652–674, 680–702, and 708–730; these read HVCSECGKAFLKLSQFIDHQRVH, HVCSMCGKAFSRKSRLMDHQRTH, YECTECDKTFLKKSQLNIHQKTH, YTCSQCGKAFIKKCRLIYHQRTH, HGCSVCGKAFSTKFSLTTHQKTH, YICSECGKGFIEKRRLTAHHRTH, FICNKCGKGFTLKNSLITHQQTH, YTCSECGKGFSMKHCLMVHQRTH, YKCNECGKGFALKSPLIRHQRTH, YVCTECRKGFTMKSDLIVHQRTH, YICNDCGKGFTVKSRLIVHQRTH, YVCGECGKGFPAKIRLMGHQRTH, YICNECGKGFTEKSHLNVHRRTH, YVCSECGKGLTGKSMLIAHQRTH, YICNECGKGFTMKSTLSIHQQTH, YKCNECDKTFRKKTCLIQHQRFH, FACTECGKFSLRKNDLITHQRIH, YKCSDCGKAFTTKSGLNVHQRKH, and YGCSDCGKAFAHLSILVKHRRIH.

This sequence belongs to the krueppel C2H2-type zinc-finger protein family.

It is found in the nucleus. Its function is as follows. May be involved in transcriptional regulation. This Homo sapiens (Human) protein is Zinc finger protein 615 (ZNF615).